Consider the following 236-residue polypeptide: (5-formylfuran-3-yl)methyl phosphate synthase (236 aa).

Lys27 serves as the catalytic Schiff-base intermediate with substrate. The Proton acceptor role is filled by Lys85.

It belongs to the MfnB family.

The enzyme catalyses 2 D-glyceraldehyde 3-phosphate = 4-(hydroxymethyl)-2-furancarboxaldehyde phosphate + phosphate + 2 H2O. It participates in cofactor biosynthesis; methanofuran biosynthesis. Catalyzes the formation of 4-(hydroxymethyl)-2-furancarboxaldehyde phosphate (4-HFC-P) from two molecules of glyceraldehyde-3-P (GA-3-P). The chain is (5-formylfuran-3-yl)methyl phosphate synthase from Methanothermobacter thermautotrophicus (strain ATCC 29096 / DSM 1053 / JCM 10044 / NBRC 100330 / Delta H) (Methanobacterium thermoautotrophicum).